The chain runs to 147 residues: MKLPAYIDMPFQEWKTSFSFFNKVSVRFSETDMFGHMNNVTPFIYFEEVRISYFKKLNMMSENKQTMTVVASQQCDYLRQVMPYEELRIYVKTSAVGSSSLTLHYLGENLEGEPCFTGAVVMVQVSKESGKAVSWTDEEKETLLHTR.

This is an uncharacterized protein from Bacillus subtilis (strain 168).